A 620-amino-acid chain; its full sequence is Probably inactive leucine-rich repeat receptor-like protein kinase At5g48380 (620 aa).

The signal sequence occupies residues 1-27 (MMMGRLVFVIWLYNCLCLLLLSSLVDA). At 28-228 (DQANIDCLRT…SASSSRGKVV (201 aa)) the chain is on the extracellular side. Residues Asn-56, Asn-111, Asn-119, and Asn-147 are each glycosylated (N-linked (GlcNAc...) asparagine). LRR repeat units lie at residues 101–124 (DLTG…STLI), 126–148 (LVTI…ISNI), 150–172 (FLNT…LAQL), and 174–196 (RLKT…NQTL). N-linked (GlcNAc...) asparagine glycosylation occurs at Asn-193. Residues 229–249 (IIAAVGGLTAAALVVGVVLFF) traverse the membrane as a helical segment. The Cytoplasmic portion of the chain corresponds to 250 to 620 (YFRKLGAVRK…DFIEELIVAR (371 aa)). Position 300 is a phosphothreonine (Thr-300). Positions 303–596 (FKKDNIIATG…RAIGESYNFT (294 aa)) constitute a Protein kinase domain. Residues 309–317 (IATGRTGTM) and Lys-331 contribute to the ATP site. Thr-463 is modified (phosphothreonine). Tyr-479 is modified (phosphotyrosine). Thr-482 is modified (phosphothreonine).

It belongs to the protein kinase superfamily. Ser/Thr protein kinase family.

It localises to the cell membrane. The protein is Probably inactive leucine-rich repeat receptor-like protein kinase At5g48380 of Arabidopsis thaliana (Mouse-ear cress).